The primary structure comprises 162 residues: Peroxiredoxin-2C (162 aa).

Positions 4-162 (ITVGDVVPDG…SSAEDILKAL (159 aa)) constitute a Thioredoxin domain. Cysteine 51 acts as the Cysteine sulfenic acid (-SOH) intermediate in catalysis.

Belongs to the peroxiredoxin family. Prx5 subfamily. Monomer. Highly expressed in buds and flowers. Slightly expressed in green tissues. Also detected in pollen.

It localises to the cytoplasm. It catalyses the reaction [glutaredoxin]-dithiol + a hydroperoxide = [glutaredoxin]-disulfide + an alcohol + H2O. Functionally, thiol-specific peroxidase that catalyzes the reduction of hydrogen peroxide and organic hydroperoxides to water and alcohols, respectively. Plays a role in cell protection against oxidative stress by detoxifying peroxides and as sensor of hydrogen peroxide-mediated signaling events. The chain is Peroxiredoxin-2C (PRXIIC) from Arabidopsis thaliana (Mouse-ear cress).